A 1344-amino-acid chain; its full sequence is Myb-binding protein 1A (1344 aa).

A disordered region spans residues 1-24; sequence MAEMKSPTKAEPASPAEAPQGDRR. The residue at position 2 (Ala-2) is an N-acetylalanine. Residues 2-580 form an interaction with MYB region; that stretch reads AEMKSPTKAE…WDQMMSTLKE (579 aa). Ser-14 is modified (phosphoserine). Residues Lys-69 and Lys-156 each carry the N6-acetyllysine modification. 2 short sequence motifs (nuclear export signal) span residues 238-256 and 261-279; these read SEDN…ANSV and KLPD…ENKF. Disordered regions lie at residues 696 to 752 and 1150 to 1344; these read NEDE…DVDP and PKSE…VQTP. A compositionally biased stretch (basic and acidic residues) spans 708-730; it reads TDEKQLKHGEDADSDSEDSKNSE. Positions 731-746 are enriched in acidic residues; it reads SDVDSEDGEESEEEDR. The segment covering 1150–1161 has biased composition (basic and acidic residues); that stretch reads PKSEKKNVKDIP. A Glycyl lysine isopeptide (Lys-Gly) (interchain with G-Cter in SUMO2) cross-link involves residue Lys-1151. The segment at 1154-1344 is required for nuclear and nucleolar localization; the sequence is KKNVKDIPSD…RVARRRVQTP (191 aa). Ser-1162 and Ser-1166 each carry phosphoserine. Over residues 1170–1187 the composition is skewed to basic residues; that stretch reads TKRKKKGFLPETKKRKKL. Ser-1189 bears the Phosphoserine mark. Phosphothreonine is present on Thr-1193. Phosphoserine is present on residues Ser-1221 and Ser-1246. The span at 1247–1256 shows a compositional bias: low complexity; the sequence is PAPNNPTLSP. A Phosphothreonine modification is found at Thr-1253. Ser-1255 carries the phosphoserine modification. Phosphothreonine occurs at positions 1258 and 1280. Ser-1283, Ser-1305, and Ser-1318 each carry phosphoserine. Positions 1301–1316 are enriched in basic residues; it reads VKRRSSQSALPKKRAR. Residues 1317–1329 show a composition bias toward low complexity; the sequence is LSLVSRSPSLLQS. Arg-1322 is modified (citrulline). 3 positions are modified to phosphoserine: Ser-1323, Ser-1325, and Ser-1329. The segment covering 1331–1344 has biased composition (basic residues); that stretch reads IRKRRVARRRVQTP.

It belongs to the MYBBP1A family. Binds to and represses JUN and MYB via the leucine zipper regions present in these proteins. Also binds to and represses PPARGC1A: this interaction is abrogated when PPARGC1A is phosphorylated by MAPK1/ERK. Binds to and stimulates transcription by AHR. Binds to KPNA2. Component of the B-WICH complex, at least composed of SMARCA5/SNF2H, BAZ1B/WSTF, SF3B1, DEK, MYO1C, ERCC6, MYBBP1A and DDX21. Interacts with CLOCK and CRY1. In terms of processing, citrullinated by PADI4.

It is found in the nucleus. The protein localises to the nucleolus. It localises to the cytoplasm. Functionally, may activate or repress transcription via interactions with sequence specific DNA-binding proteins. Repression may be mediated at least in part by histone deacetylase activity (HDAC activity). Acts as a corepressor and in concert with CRY1, represses the transcription of the core circadian clock component PER2. Preferentially binds to dimethylated histone H3 'Lys-9' (H3K9me2) on the PER2 promoter. Has a role in rRNA biogenesis together with PWP1. The protein is Myb-binding protein 1A (Mybbp1a) of Rattus norvegicus (Rat).